A 320-amino-acid polypeptide reads, in one-letter code: Cytochrome c biogenesis protein CcsA (320 aa).

8 helical membrane passes run 9–29 (ILAH…WGTL), 36–56 (LSSS…GLLI), 70–90 (LYES…LLEV), 97–117 (WLGA…TLGL), 143–163 (ILFS…LLVI), 227–247 (AIGL…IWAN), 254–274 (WSWD…AIYL), and 288–308 (AIVA…VNLL).

It belongs to the CcmF/CycK/Ccl1/NrfE/CcsA family. As to quaternary structure, may interact with Ccs1.

The protein localises to the plastid. The protein resides in the chloroplast thylakoid membrane. Functionally, required during biogenesis of c-type cytochromes (cytochrome c6 and cytochrome f) at the step of heme attachment. This chain is Cytochrome c biogenesis protein CcsA, found in Pinus thunbergii (Japanese black pine).